The chain runs to 98 residues: Integration host factor subunit alpha (98 aa).

The segment covering 53 to 69 (DLREKSERPGRNPKTGE) has biased composition (basic and acidic residues). The disordered stretch occupies residues 53–73 (DLREKSERPGRNPKTGEDIPI).

The protein belongs to the bacterial histone-like protein family. In terms of assembly, heterodimer of an alpha and a beta chain.

Functionally, this protein is one of the two subunits of integration host factor, a specific DNA-binding protein that functions in genetic recombination as well as in transcriptional and translational control. This is Integration host factor subunit alpha from Aliivibrio fischeri (strain ATCC 700601 / ES114) (Vibrio fischeri).